A 101-amino-acid polypeptide reads, in one-letter code: NAD(P)H-quinone oxidoreductase subunit 4L, chloroplastic (101 aa).

Transmembrane regions (helical) follow at residues 2-22 (MTEY…YGLI), 32-52 (MCLE…SDLF), and 61-81 (IFSI…PAIV).

The protein belongs to the complex I subunit 4L family. NDH is composed of at least 16 different subunits, 5 of which are encoded in the nucleus.

The protein resides in the plastid. It localises to the chloroplast thylakoid membrane. The catalysed reaction is a plastoquinone + NADH + (n+1) H(+)(in) = a plastoquinol + NAD(+) + n H(+)(out). It catalyses the reaction a plastoquinone + NADPH + (n+1) H(+)(in) = a plastoquinol + NADP(+) + n H(+)(out). Its function is as follows. NDH shuttles electrons from NAD(P)H:plastoquinone, via FMN and iron-sulfur (Fe-S) centers, to quinones in the photosynthetic chain and possibly in a chloroplast respiratory chain. The immediate electron acceptor for the enzyme in this species is believed to be plastoquinone. Couples the redox reaction to proton translocation, and thus conserves the redox energy in a proton gradient. This chain is NAD(P)H-quinone oxidoreductase subunit 4L, chloroplastic, found in Calycanthus floridus var. glaucus (Eastern sweetshrub).